Consider the following 430-residue polypeptide: Adenylosuccinate synthetase (430 aa).

Residues 12-18 (GDEGKGK) and 40-42 (GHT) contribute to the GTP site. The active-site Proton acceptor is aspartate 13. Residues aspartate 13 and glycine 40 each coordinate Mg(2+). IMP is bound by residues 13–16 (DEGK), 38–41 (NAGH), threonine 130, arginine 144, glutamine 224, threonine 239, and arginine 303. The active-site Proton donor is the histidine 41. Residue 299 to 305 (VNTGRKR) coordinates substrate. GTP is bound by residues arginine 305, 331–333 (KLD), and 413–415 (STS).

Belongs to the adenylosuccinate synthetase family. As to quaternary structure, homodimer. Mg(2+) is required as a cofactor.

The protein resides in the cytoplasm. It carries out the reaction IMP + L-aspartate + GTP = N(6)-(1,2-dicarboxyethyl)-AMP + GDP + phosphate + 2 H(+). Its pathway is purine metabolism; AMP biosynthesis via de novo pathway; AMP from IMP: step 1/2. Its function is as follows. Plays an important role in the de novo pathway of purine nucleotide biosynthesis. Catalyzes the first committed step in the biosynthesis of AMP from IMP. The protein is Adenylosuccinate synthetase of Nitrobacter winogradskyi (strain ATCC 25391 / DSM 10237 / CIP 104748 / NCIMB 11846 / Nb-255).